Reading from the N-terminus, the 216-residue chain is Peptide methionine sulfoxide reductase MsrA (216 aa).

Cys-54 is a catalytic residue.

It belongs to the MsrA Met sulfoxide reductase family.

It catalyses the reaction L-methionyl-[protein] + [thioredoxin]-disulfide + H2O = L-methionyl-(S)-S-oxide-[protein] + [thioredoxin]-dithiol. The enzyme catalyses [thioredoxin]-disulfide + L-methionine + H2O = L-methionine (S)-S-oxide + [thioredoxin]-dithiol. In terms of biological role, has an important function as a repair enzyme for proteins that have been inactivated by oxidation. Catalyzes the reversible oxidation-reduction of methionine sulfoxide in proteins to methionine. This chain is Peptide methionine sulfoxide reductase MsrA, found in Xanthomonas euvesicatoria pv. vesicatoria (strain 85-10) (Xanthomonas campestris pv. vesicatoria).